The sequence spans 624 residues: Probable potassium transport system protein Kup 2 (624 aa).

The next 12 membrane-spanning stretches (helical) occupy residues 14 to 34 (LSFA…LYAF), 51 to 71 (ILSL…LVIV), 97 to 117 (GGWL…DGML), 133 to 153 (LSPN…FFLF), 163 to 183 (IGVY…ILGF), 211 to 231 (SALF…ALFA), 245 to 265 (WFAV…AFVL), 283 to 303 (FLPV…QAII), 335 to 355 (VYLP…VVIF), 364 to 384 (AYGI…GIIA), 393 to 413 (FKIL…AGNI), and 416 to 436 (LLTG…VMYT).

Belongs to the HAK/KUP transporter (TC 2.A.72) family.

It is found in the cell inner membrane. It catalyses the reaction K(+)(in) + H(+)(in) = K(+)(out) + H(+)(out). Transport of potassium into the cell. Likely operates as a K(+):H(+) symporter. This chain is Probable potassium transport system protein Kup 2, found in Legionella pneumophila (strain Lens).